The primary structure comprises 185 residues: Large ribosomal subunit protein uL6m (185 aa).

Belongs to the universal ribosomal protein uL6 family.

The protein resides in the mitochondrion. The polypeptide is Large ribosomal subunit protein uL6m (RPL6) (Reclinomonas americana).